A 196-amino-acid polypeptide reads, in one-letter code: Glycerol-3-phosphate acyltransferase (196 aa).

5 helical membrane-spanning segments follow: residues 4–24 (LTLTMIIAAYLIGSISSAILV), 56–76 (ATVLFLDILKGTIPVWGAYFL), 80–100 (SLYLGFIGVSACLGHMYPIFF), 114–134 (TLLPIGFTLGGLLILTWVLVV), and 155–175 (VYFLKPLYVYPTLMLSALILF).

It belongs to the PlsY family. As to quaternary structure, probably interacts with PlsX.

The protein localises to the cell inner membrane. It carries out the reaction an acyl phosphate + sn-glycerol 3-phosphate = a 1-acyl-sn-glycero-3-phosphate + phosphate. It participates in lipid metabolism; phospholipid metabolism. Its function is as follows. Catalyzes the transfer of an acyl group from acyl-phosphate (acyl-PO(4)) to glycerol-3-phosphate (G3P) to form lysophosphatidic acid (LPA). This enzyme utilizes acyl-phosphate as fatty acyl donor, but not acyl-CoA or acyl-ACP. The sequence is that of Glycerol-3-phosphate acyltransferase from Colwellia psychrerythraea (strain 34H / ATCC BAA-681) (Vibrio psychroerythus).